We begin with the raw amino-acid sequence, 589 residues long: uncharacterized protein (589 aa).

Helical transmembrane passes span 90-110 (YIVI…QTVI), 128-148 (SWIG…CGIM), 162-182 (IVLF…LWLV), 189-209 (GIGG…ITPL), 217-237 (GCMG…GGAI), 245-265 (WIFF…IFFL), 284-304 (FVGI…LNIG), 311-331 (AHAN…GFVV), 355-375 (VMVT…YIPI), 390-410 (VHTL…GMGI), 418-438 (YPMI…IAIY), 448-468 (GFLA…LIAI), 483-503 (AFML…AVIY), and 545-565 (IRTI…LSFF).

This sequence belongs to the major facilitator superfamily. TCR/Tet family.

It is found in the membrane. This is an uncharacterized protein from Schizosaccharomyces pombe (strain 972 / ATCC 24843) (Fission yeast).